The primary structure comprises 141 residues: MKLVESNDTVDFPDGVTFTVKNRVVHVTGPRGTLKRDFRHLHMEMERVGKNQLRVRKWFGVRKEIAAIRTVCSHIQNMIKGVTKGFRYKMRSVYAHFPINVTLQDGGRTVEIRNFLGEKIVRPVPLRMCHCHVVHFTRTLD.

This sequence belongs to the universal ribosomal protein uL6 family.

The chain is Large ribosomal subunit protein uL6 from Haemonchus contortus (Barber pole worm).